The sequence spans 201 residues: LexA repressor (201 aa).

A DNA-binding region (H-T-H motif) is located at residues 28–48 (MRDIAAHLRISGTLGVSKHLT). Catalysis depends on for autocatalytic cleavage activity residues serine 120 and lysine 157.

Belongs to the peptidase S24 family. In terms of assembly, homodimer.

It catalyses the reaction Hydrolysis of Ala-|-Gly bond in repressor LexA.. Functionally, represses a number of genes involved in the response to DNA damage (SOS response), including recA and lexA. In the presence of single-stranded DNA, RecA interacts with LexA causing an autocatalytic cleavage which disrupts the DNA-binding part of LexA, leading to derepression of the SOS regulon and eventually DNA repair. In Geobacter metallireducens (strain ATCC 53774 / DSM 7210 / GS-15), this protein is LexA repressor.